A 2321-amino-acid chain; its full sequence is Neurogenic locus notch homolog protein 3 (2321 aa).

Residues 1-14 are compositionally biased toward basic residues; sequence MGPGARGRRRRRRP. The interval 1-26 is disordered; that stretch reads MGPGARGRRRRRRPMSPPPPPPPVRA. The first 39 residues, 1–39, serve as a signal peptide directing secretion; the sequence is MGPGARGRRRRRRPMSPPPPPPPVRALPLLLLLAGPGAA. Residues 15–25 are compositionally biased toward pro residues; sequence MSPPPPPPPVR. EGF-like domains are found at residues 40–77, 78–118, and 119–156; these read APPCLDGSPCANGGRCTQLPSREAACLCPPGWVGERCQ, LEDP…PDCS, and LPDPCLSSPCAHGARCSVGPDGRFLCSCPPGYQGRSCR. Residues 40-1643 are Extracellular-facing; it reads APPCLDGSPC…LEPPEPSVPL (1604 aa). 99 disulfide bridges follow: Cys-43–Cys-55, Cys-49–Cys-65, Cys-67–Cys-76, Cys-82–Cys-93, Cys-87–Cys-106, Cys-108–Cys-117, Cys-123–Cys-134, Cys-128–Cys-144, Cys-146–Cys-155, Cys-162–Cys-174, Cys-168–Cys-183, Cys-185–Cys-194, Cys-201–Cys-212, Cys-206–Cys-222, Cys-224–Cys-233, Cys-240–Cys-251, Cys-245–Cys-260, Cys-262–Cys-271, Cys-278–Cys-291, Cys-285–Cys-300, Cys-302–Cys-311, Cys-318–Cys-329, Cys-323–Cys-338, Cys-340–Cys-349, Cys-355–Cys-366, Cys-360–Cys-377, Cys-379–Cys-388, Cys-395–Cys-408, Cys-402–Cys-417, Cys-419–Cys-428, Cys-435–Cys-446, Cys-440–Cys-455, Cys-457–Cys-466, Cys-473–Cys-484, Cys-478–Cys-493, Cys-495–Cys-504, Cys-511–Cys-522, Cys-516–Cys-531, Cys-533–Cys-542, Cys-549–Cys-559, Cys-554–Cys-568, Cys-570–Cys-579, Cys-586–Cys-597, Cys-591–Cys-606, Cys-608–Cys-617, Cys-624–Cys-634, Cys-629–Cys-643, Cys-645–Cys-654, Cys-661–Cys-672, Cys-666–Cys-681, Cys-683–Cys-692, Cys-699–Cys-709, Cys-704–Cys-718, Cys-720–Cys-729, Cys-738–Cys-749, Cys-743–Cys-758, Cys-760–Cys-769, Cys-775–Cys-786, Cys-780–Cys-796, Cys-798–Cys-807, Cys-814–Cys-826, Cys-820–Cys-835, Cys-837–Cys-846, Cys-853–Cys-864, Cys-858–Cys-873, Cys-875–Cys-884, Cys-891–Cys-901, Cys-896–Cys-910, Cys-912–Cys-921, Cys-928–Cys-939, Cys-933–Cys-948, Cys-950–Cys-959, Cys-966–Cys-977, Cys-971–Cys-986, Cys-988–Cys-997, Cys-1004–Cys-1015, Cys-1009–Cys-1022, Cys-1024–Cys-1033, Cys-1040–Cys-1061, Cys-1055–Cys-1070, Cys-1072–Cys-1081, Cys-1088–Cys-1099, Cys-1093–Cys-1108, Cys-1110–Cys-1119, Cys-1126–Cys-1137, Cys-1131–Cys-1146, Cys-1148–Cys-1157, Cys-1164–Cys-1182, Cys-1176–Cys-1191, Cys-1193–Cys-1202, Cys-1209–Cys-1222, Cys-1214–Cys-1232, Cys-1234–Cys-1243, Cys-1250–Cys-1261, Cys-1255–Cys-1275, Cys-1277–Cys-1286, Cys-1293–Cys-1304, Cys-1298–Cys-1313, and Cys-1315–Cys-1324. Residues 158–195 enclose the EGF-like 4; calcium-binding domain; that stretch reads DVDECRVGEPCRHGGTCLNTPGSFRCQCPAGYTGPLCE. The EGF-like 5 domain maps to 197-234; sequence PAVPCAPSPCRNGGTCRQSGDLTYDCACLPGFEGQNCE. One can recognise an EGF-like 6; calcium-binding domain in the interval 236 to 272; that stretch reads NVDDCPGHRCLNGGTCVDGVNTYNCQCPPEWTGQFCT. The EGF-like 7 domain occupies 274–312; the sequence is DVDECQLQPNACHNGGTCFNTLGGHSCVCVNGWTGESCS. In terms of domain architecture, EGF-like 8; calcium-binding spans 314–350; sequence NIDDCATAVCFHGATCHDRVASFYCACPMGKTGLLCH. The 39-residue stretch at 351-389 folds into the EGF-like 9 domain; the sequence is LDDACVSNPCHEDAICDTNPVNGRAICTCPPGFTGGACD. One can recognise an EGF-like 10; calcium-binding domain in the interval 391–429; that stretch reads DVDECSIGANPCEHLGRCVNTQGSFLCQCGRGYTGPRCE. Positions 431 to 467 constitute an EGF-like 11; calcium-binding domain; that stretch reads DVNECLSGPCRNQATCLDRIGQFTCICMAGFTGTYCE. In terms of domain architecture, EGF-like 12; calcium-binding spans 469–505; it reads DIDECQSSPCVNGGVCKDRVNGFSCTCPSGFSGSTCQ. The region spanning 507–543 is the EGF-like 13; calcium-binding domain; it reads DVDECASTPCRNGAKCVDQPDGYECRCAEGFEGTLCD. One can recognise an EGF-like 14; calcium-binding domain in the interval 545 to 580; sequence NVDDCSPDPCHHGRCVDGIASFSCACAPGYTGTRCE. The 37-residue stretch at 582-618 folds into the EGF-like 15; calcium-binding domain; that stretch reads QVDECRSQPCRHGGKCLDLVDKYLCRCPSGTTGVNCE. Residues 620–655 enclose the EGF-like 16; calcium-binding domain; the sequence is NIDDCASNPCTFGVCRDGINRYDCVCQPGFTGPLCN. The 37-residue stretch at 657–693 folds into the EGF-like 17; calcium-binding domain; that stretch reads EINECASSPCGEGGSCVDGENGFRCLCPPGSLPPLCL. 3 EGF-like domains span residues 695 to 730, 734 to 770, and 771 to 808; these read PSHPCAHEPCSHGICYDAPGGFRCVCEPGWSGPRCS, ARDACESQPCRAGGTCSSDGMGFHCTCPPGVQGRQCE, and LLSPCTPNPCEHGGRCESAPGQLPVCSCPQGWQGPRCQ. Residues 810-847 form the EGF-like 21; calcium-binding domain; the sequence is DVDECAGPAPCGPHGICTNLAGSFSCTCHGGYTGPSCD. Residues 849–885 enclose the EGF-like 22; calcium-binding domain; it reads DINDCDPNPCLNGGSCQDGVGSFSCSCLPGFAGPRCA. The region spanning 887-922 is the EGF-like 23; calcium-binding domain; it reads DVDECLSNPCGPGTCTDHVASFTCTCPPGYGGFHCE. EGF-like domains follow at residues 924 to 960, 962 to 998, 1000 to 1034, 1036 to 1082, and 1084 to 1120; these read DLPDCSPSSCFNGGTCVDGVNSFSCLCRPGYTGAHCQ, EADPCLSRPCLHGGVCSAAHPGFRCTCLESFTGPQCQ, LVDWCSRQPCQNGGRCVQTGAYCLCPPGWSGRLCD, RSLP…SHCE, and EVDPCLAQPCQHGGTCRGYMGGYMCECLPGYNGDNCE. In terms of domain architecture, EGF-like 29; calcium-binding spans 1122–1158; that stretch reads DVDECASQPCQHGGSCIDLVARYLCSCPPGTLGVLCE. The region spanning 1160-1203 is the EGF-like 30; calcium-binding domain; the sequence is NEDDCGPGPPLDSGPRCLHNGTCVDLVGGFRCTCPPGYTGLRCE. The N-linked (GlcNAc...) asparagine glycan is linked to Asn-1179. 4 EGF-like domains span residues 1205-1244, 1246-1287, 1289-1325, and 1335-1373; these read DINECRSGACHAAHTRDCLQDPGGGFRCLCHAGFSGPRCQ, VLSP…PRCE, VARSCRELQCPVGVPCQQTPRGPRCACPPGLSGPSCR, and SNASCAAAPCLHGGSCRPAPLAPFFRCACAQGWTGPRCE. An N-linked (GlcNAc...) asparagine glycan is attached at Asn-1336. Cystine bridges form between Cys-1339–Cys-1350, Cys-1344–Cys-1361, Cys-1363–Cys-1372, Cys-1387–Cys-1410, Cys-1392–Cys-1405, Cys-1401–Cys-1417, Cys-1428–Cys-1451, Cys-1433–Cys-1446, Cys-1442–Cys-1458, Cys-1467–Cys-1493, Cys-1475–Cys-1488, and Cys-1484–Cys-1500. LNR repeat units lie at residues 1387-1427, 1428-1458, and 1467-1505; these read CPRA…PWRQ, CEALQCWRLFNNSRCDPACSSPACLYDNFDC, and CNPVYEKYCADHFADGRCDQGCNTEECGWDGLDCASEVP. A glycan (N-linked (GlcNAc...) asparagine) is linked at Asn-1438. Residues 1644–1664 form a helical membrane-spanning segment; the sequence is LPLLVAGAVLLLVILVLGVMV. At 1665-2321 the chain is on the cytoplasmic side; the sequence is ARRKREHSTL…EVTPKRQVLA (657 aa). 5 ANK repeats span residues 1838-1867, 1871-1901, 1905-1934, 1938-1967, and 1971-2000; these read TGETALHLAARYARADAAKRLLDAGADTNA, SGRTPLHTAVTADAQGVFQILIRNRSTDLDA, DGSTALILAARLAVEGMVEELIASHADVNA, LGKSALHWAAAVNNVEATLALLKNGANKDM, and KEETPLFLAAREGSYEAAKLLLDHFANREI. The tract at residues 2024–2120 is disordered; sequence LDQPSGPRSP…FGGPPASPGG (97 aa). Positions 2039-2053 are enriched in low complexity; it reads LGPLLCPPGAFLPGL. Arg-2174 carries the omega-N-methylarginine modification. Positions 2190-2321 are disordered; sequence APGPQLLNPG…EVTPKRQVLA (132 aa). Low complexity predominate over residues 2269–2289; that stretch reads STPSPATATGAMATTTGALPA. Over residues 2296–2308 the composition is skewed to polar residues; that stretch reads VPSSLAQAQTQLG.

Belongs to the NOTCH family. Heterodimer of a C-terminal fragment N(TM) and a N-terminal fragment N(EC) which are probably linked by disulfide bonds. Interacts with MAML1, MAML2 and MAML3 which act as transcriptional coactivators for NOTCH3. Interacts with PSMA1. Interacts with HIF1AN. In terms of processing, synthesized in the endoplasmic reticulum as an inactive form which is proteolytically cleaved by a furin-like convertase in the trans-Golgi network before it reaches the plasma membrane to yield an active, ligand-accessible form. Cleavage results in a C-terminal fragment N(TM) and a N-terminal fragment N(EC). Following ligand binding, it is cleaved by TNF-alpha converting enzyme (TACE) to yield a membrane-associated intermediate fragment called notch extracellular truncation (NEXT). This fragment is then cleaved by presenilin dependent gamma-secretase to release a notch-derived peptide containing the intracellular domain (NICD) from the membrane. Post-translationally, phosphorylated. Hydroxylated by HIF1AN. In terms of tissue distribution, ubiquitously expressed in fetal and adult tissues.

Its subcellular location is the cell membrane. It localises to the nucleus. In terms of biological role, functions as a receptor for membrane-bound ligands Jagged1, Jagged2 and Delta1 to regulate cell-fate determination. Upon ligand activation through the released notch intracellular domain (NICD) it forms a transcriptional activator complex with RBPJ/RBPSUH and activates genes of the enhancer of split locus. Affects the implementation of differentiation, proliferation and apoptotic programs. The protein is Neurogenic locus notch homolog protein 3 (NOTCH3) of Homo sapiens (Human).